A 502-amino-acid chain; its full sequence is Glycerol kinase (502 aa).

Thr-14 serves as a coordination point for ADP. Thr-14 and Thr-15 together coordinate ATP. Thr-14 provides a ligand contact to sn-glycerol 3-phosphate. Arg-18 is a binding site for ADP. Sn-glycerol 3-phosphate-binding residues include Arg-84, Glu-85, Tyr-136, and Asp-245. Residues Arg-84, Glu-85, Tyr-136, Asp-245, and Gln-246 each contribute to the glycerol site. Positions 267 and 314 each coordinate ADP. ATP-binding residues include Thr-267, Gly-314, Gln-318, and Gly-415. Positions 415 and 419 each coordinate ADP.

The protein belongs to the FGGY kinase family.

It catalyses the reaction glycerol + ATP = sn-glycerol 3-phosphate + ADP + H(+). The protein operates within polyol metabolism; glycerol degradation via glycerol kinase pathway; sn-glycerol 3-phosphate from glycerol: step 1/1. Its activity is regulated as follows. Inhibited by fructose 1,6-bisphosphate (FBP). Functionally, key enzyme in the regulation of glycerol uptake and metabolism. Catalyzes the phosphorylation of glycerol to yield sn-glycerol 3-phosphate. The chain is Glycerol kinase from Acaryochloris marina (strain MBIC 11017).